We begin with the raw amino-acid sequence, 973 residues long: E3 ubiquitin-protein ligase MIB2 (973 aa).

An MIB/HERC2 1 domain is found at 1-80 (MDLDPHAGVQ…AHDLLLYDNA (80 aa)). The ZZ-type zinc finger occupies 86-138 (HPNIICDCCKKHGLRGMRWKCRVCFDYDLCTQCYMHNKHDLTHAFERYETSHS). Positions 91, 94, 106, 109, 115, 118, 124, and 128 each coordinate Zn(2+). The MIB/HERC2 2 domain maps to 149–227 (LPRIPLRGIF…KVDLRCVGEA (79 aa)). At S251 the chain carries Phosphoserine. ANK repeat units follow at residues 480-509 (QGRT…SMDL), 513-542 (EGNT…AVDA), 546-575 (TRST…DVNL), 579-611 (HADT…DVTA), 615-644 (QGFT…QLVD), 649-679 (DGFT…DVNV), 683-712 (KLQS…SVNT), 716-744 (EGDT…DPGP), and 785-814 (RGRS…ERQA). RING-type zinc fingers lie at residues 850-885 (CLVC…IRCQ) and 929-962 (CPIC…PICR).

In terms of assembly, interacts with actin monomer. Ubiquitinated. Possibly via autoubiquitination. In terms of tissue distribution, highly expressed in brain, heart, liver and kidney.

It localises to the cytoplasm. Its subcellular location is the endosome. It carries out the reaction S-ubiquitinyl-[E2 ubiquitin-conjugating enzyme]-L-cysteine + [acceptor protein]-L-lysine = [E2 ubiquitin-conjugating enzyme]-L-cysteine + N(6)-ubiquitinyl-[acceptor protein]-L-lysine.. It functions in the pathway protein modification; protein ubiquitination. Functionally, E3 ubiquitin-protein ligase that mediates ubiquitination of Delta receptors, which act as ligands of Notch proteins. Positively regulates the Delta-mediated Notch signaling by ubiquitinating the intracellular domain of Delta, leading to endocytosis of Delta receptors. In Mus musculus (Mouse), this protein is E3 ubiquitin-protein ligase MIB2 (Mib2).